Reading from the N-terminus, the 648-residue chain is Actin-related protein 5 (648 aa).

Residues 34-59 (LTKPRKDRKKEAAASEGSASQTTVEQ) form a disordered region. Coiled coils occupy residues 277–311 (TAEQ…EQQL) and 340–364 (TLED…RAQS). Disordered stretches follow at residues 357–385 (RAQE…PEGM) and 403–455 (GRKQ…GMND). The segment covering 414 to 428 (EQAKRHTHAAQERMR) has biased composition (basic and acidic residues). 2 positions are modified to phosphoserine: Ser-471 and Ser-473.

This sequence belongs to the actin family. ARP5 subfamily. As to quaternary structure, component of the chromatin remodeling Ino80 complex.

Its subcellular location is the nucleus. Proposed core component of the chromatin remodeling Ino80 complex which is involved in transcriptional regulation, DNA replication and probably DNA repair. This Drosophila melanogaster (Fruit fly) protein is Actin-related protein 5.